The following is a 488-amino-acid chain: MAPAAWLRSAAARALLPPMLLLLLQPPPLLARALPPDAHHLHAERRGPQPWHAALPSSPAPAPATQEAPRPASSLRPPRCGVPDPSDGLSARNRQKRFVLSGGRWEKTDLTYRILRFPWQLVQEQVRQTMAEALKVWSDVTPLTFTEVHEGRADIMIDFARYWHGDDLPFDGPGGILAHAFFPKTHREGDVHFDYDETWTIGDDQGTDLLQVAAHEFGHVLGLQHTTAAKALMSAFYTFRYPLSLSPDDCRGVQHLYGQPWPTVTSRTPALGPQAGIDTNEIAPLEPDAPPDACEASFDAVSTIRGELFFFKAGFVWRLRGGQLQPGYPALASRHWQGLPSPVDAAFEDAQGHIWFFQGAQYWVYDGEKPVLGPAPLTELGLVRFPVHAALVWGPEKNKIYFFRGRDYWRFHPSTRRVDSPVPRRATDWRGVPSEIDAAFQDADGYAYFLRGRLYWKFDPVKVKALEGFPRLVGPDFFGCAEPANTFL.

The first 31 residues, 1–31, serve as a signal peptide directing secretion; it reads MAPAAWLRSAAARALLPPMLLLLLQPPPLLA. The propeptide at 32–97 is activation peptide; sequence RALPPDAHHL…GLSARNRQKR (66 aa). The disordered stretch occupies residues 41 to 93; it reads LHAERRGPQPWHAALPSSPAPAPATQEAPRPASSLRPPRCGVPDPSDGLSARN. Low complexity predominate over residues 50 to 79; it reads PWHAALPSSPAPAPATQEAPRPASSLRPPR. Residues 78-85 carry the Cysteine switch motif; it reads PRCGVPDP. Residues cysteine 80 and aspartate 166 each coordinate Zn(2+). Ca(2+) contacts are provided by aspartate 171, glycine 172, glycine 174, and isoleucine 176. Zn(2+) is bound by residues histidine 179, histidine 192, and histidine 215. The active site involves glutamate 216. Zn(2+) is bound by residues histidine 219 and histidine 225. Hemopexin repeat units follow at residues 291–339, 340–382, 384–432, and 433–480; these read PDAC…WQGL, PSPV…ELGL, RFPV…WRGV, and PSEI…FFGC. Cysteine 294 and cysteine 480 form a disulfide bridge.

The protein belongs to the peptidase M10A family. Requires Ca(2+) as cofactor. Zn(2+) serves as cofactor. The precursor is cleaved by a furin endopeptidase. As to expression, specifically expressed in stromal cells of breast carcinomas.

The protein resides in the secreted. It is found in the extracellular space. The protein localises to the extracellular matrix. Functionally, may play an important role in the progression of epithelial malignancies. The protein is Stromelysin-3 (MMP11) of Homo sapiens (Human).